Consider the following 185-residue polypeptide: MVSSWRVQQAAQDIRAGAVIAYPTEAVWGLGCDPWDEEAVYRLLAIKSRPVEKGLILIADNIRQFDFLFEDFPQLWLDRMASTWPGPNTWLVPHQNLLPEWITGIHETVALRVTDHPTVRELCALVGPLISTSANPAGRPAARSRLRVEQYFRGQIDGVLGGSLGGRRNPSVIRDIATGQVMRAG.

A YrdC-like domain is found at 4–185 (SWRVQQAAQD…IATGQVMRAG (182 aa)).

This sequence belongs to the SUA5 family. TsaC subfamily.

The protein resides in the cytoplasm. The enzyme catalyses L-threonine + hydrogencarbonate + ATP = L-threonylcarbamoyladenylate + diphosphate + H2O. In terms of biological role, required for the formation of a threonylcarbamoyl group on adenosine at position 37 (t(6)A37) in tRNAs that read codons beginning with adenine. Catalyzes the conversion of L-threonine, HCO(3)(-)/CO(2) and ATP to give threonylcarbamoyl-AMP (TC-AMP) as the acyladenylate intermediate, with the release of diphosphate. This chain is Threonylcarbamoyl-AMP synthase, found in Pseudomonas savastanoi pv. phaseolicola (strain 1448A / Race 6) (Pseudomonas syringae pv. phaseolicola (strain 1448A / Race 6)).